A 255-amino-acid polypeptide reads, in one-letter code: Putative F-box protein L126 (255 aa).

The F-box domain occupies 1–46; sequence MLPEEILFMVFSFLDVKELIACSHACSHACSQWRRICSDKLLWVQK.

The protein is Putative F-box protein L126 of Acanthamoeba polyphaga (Amoeba).